A 450-amino-acid chain; its full sequence is Akuammiline synthase 2 (450 aa).

Catalysis depends on histidine 154, which acts as the Proton acceptor. The short motif at 218-225 (MRRFVFDA) is the Nuclear localization signal element. Aspartate 376 serves as the catalytic Proton acceptor.

It belongs to the plant acyltransferase family. Monomer.

The protein resides in the cytoplasm. It is found in the nucleus. It catalyses the reaction rhazimol + acetyl-CoA = akuammiline + CoA + H(+). It functions in the pathway alkaloid biosynthesis. Its function is as follows. Acyltransferase involved in the biosynthesis of akuammilan monoterpene indole alkaloids (MIAs) natural products, components with various biological properties such as antidiabetic, antibacterial, anti-inflammatory, anticancer, and antimalarial activities. Catalyzes the conversion of rhazimol to akuammiline. This Alstonia scholaris (Dogbane) protein is Akuammiline synthase 2.